Consider the following 67-residue polypeptide: DNA-directed RNA polymerase subunit omega (67 aa).

The protein belongs to the RNA polymerase subunit omega family. The RNAP catalytic core consists of 2 alpha, 1 beta, 1 beta' and 1 omega subunit. When a sigma factor is associated with the core the holoenzyme is formed, which can initiate transcription.

The catalysed reaction is RNA(n) + a ribonucleoside 5'-triphosphate = RNA(n+1) + diphosphate. Its function is as follows. Promotes RNA polymerase assembly. Latches the N- and C-terminal regions of the beta' subunit thereby facilitating its interaction with the beta and alpha subunits. This is DNA-directed RNA polymerase subunit omega from Burkholderia ambifaria (strain MC40-6).